Here is a 163-residue protein sequence, read N- to C-terminus: NADH-quinone oxidoreductase subunit I (163 aa).

2 consecutive 4Fe-4S ferredoxin-type domains span residues 54–84 (LRRY…IDSA) and 94–123 (TRYD…ETHI). Residues cysteine 64, cysteine 67, cysteine 70, cysteine 74, cysteine 103, cysteine 106, cysteine 109, and cysteine 113 each contribute to the [4Fe-4S] cluster site.

The protein belongs to the complex I 23 kDa subunit family. NDH-1 is composed of 14 different subunits. Subunits NuoA, H, J, K, L, M, N constitute the membrane sector of the complex. [4Fe-4S] cluster is required as a cofactor.

It is found in the cell inner membrane. The catalysed reaction is a quinone + NADH + 5 H(+)(in) = a quinol + NAD(+) + 4 H(+)(out). NDH-1 shuttles electrons from NADH, via FMN and iron-sulfur (Fe-S) centers, to quinones in the respiratory chain. The immediate electron acceptor for the enzyme in this species is believed to be ubiquinone. Couples the redox reaction to proton translocation (for every two electrons transferred, four hydrogen ions are translocated across the cytoplasmic membrane), and thus conserves the redox energy in a proton gradient. The sequence is that of NADH-quinone oxidoreductase subunit I from Xylella fastidiosa (strain 9a5c).